Consider the following 440-residue polypeptide: UDP-N-acetylmuramoylalanine--D-glutamate ligase (440 aa).

115–121 (GSNGKST) contacts ATP.

Belongs to the MurCDEF family.

It is found in the cytoplasm. It catalyses the reaction UDP-N-acetyl-alpha-D-muramoyl-L-alanine + D-glutamate + ATP = UDP-N-acetyl-alpha-D-muramoyl-L-alanyl-D-glutamate + ADP + phosphate + H(+). It participates in cell wall biogenesis; peptidoglycan biosynthesis. Its function is as follows. Cell wall formation. Catalyzes the addition of glutamate to the nucleotide precursor UDP-N-acetylmuramoyl-L-alanine (UMA). The chain is UDP-N-acetylmuramoylalanine--D-glutamate ligase from Aliivibrio fischeri (strain ATCC 700601 / ES114) (Vibrio fischeri).